The primary structure comprises 396 residues: Metallophosphoesterase 1 (396 aa).

A helical transmembrane segment spans residues 27–47; the sequence is IAVVFAVLLFCEFLIYYLAIF. Aspartate 77, aspartate 119, asparagine 157, histidine 249, histidine 303, and histidine 305 together coordinate a divalent metal cation. Residues 356-376 traverse the membrane as a helical segment; sequence VVLVIYCGAVGFLVVLTLSHL. The short motif at 392 to 396 is the Di-lysine motif element; that stretch reads KRKTR.

The protein belongs to the metallophosphoesterase superfamily. MPPE1 family. In terms of assembly, interacts with GPI-anchor proteins (via the GPI portion). Interacts with TMED10. Requires Mn(2+) as cofactor.

It localises to the endoplasmic reticulum-Golgi intermediate compartment membrane. Metallophosphoesterase that catalyzes the removal of a side-chain ethanolamine-phosphate (EtNP) from the second mannose of the GPI-anchor protein intermediate. Participates in the glycan remodeling steps of GPI-anchor maturation to allow an efficient transport of GPI-anchor proteins from the endoplasmic reticulum to the Golgi. The protein is Metallophosphoesterase 1 of Macaca fascicularis (Crab-eating macaque).